Reading from the N-terminus, the 152-residue chain is Endoribonuclease YbeY (152 aa).

H113, H117, and H123 together coordinate Zn(2+).

The protein belongs to the endoribonuclease YbeY family. The cofactor is Zn(2+).

Its subcellular location is the cytoplasm. Functionally, single strand-specific metallo-endoribonuclease involved in late-stage 70S ribosome quality control and in maturation of the 3' terminus of the 16S rRNA. In Wolbachia pipientis subsp. Culex pipiens (strain wPip), this protein is Endoribonuclease YbeY.